A 730-amino-acid chain; its full sequence is Polyphosphate kinase (730 aa).

Basic and acidic residues predominate over residues 1–21 (MMRHDRNVTEIDAETRPDENL). The disordered stretch occupies residues 1 to 39 (MMRHDRNVTEIDAETRPDENLWHSGDSAVGAPPAATPAA). N86 provides a ligand contact to ATP. 2 residues coordinate Mg(2+): R423 and R453. The Phosphohistidine intermediate role is filled by H483. 3 residues coordinate ATP: Y516, R612, and H640.

It belongs to the polyphosphate kinase 1 (PPK1) family. It depends on Mg(2+) as a cofactor. Post-translationally, an intermediate of this reaction is the autophosphorylated ppk in which a phosphate is covalently linked to a histidine residue through a N-P bond.

The enzyme catalyses [phosphate](n) + ATP = [phosphate](n+1) + ADP. Catalyzes the reversible transfer of the terminal phosphate of ATP to form a long-chain polyphosphate (polyP). The chain is Polyphosphate kinase from Mycobacterium avium (strain 104).